The chain runs to 81 residues: CLAVATA3/ESR (CLE)-related protein 5 (81 aa).

A signal peptide spans 1–26; that stretch reads MATLILKQTLIILLIIFSLQTLSSQA. Pro-73 and Pro-76 each carry hydroxyproline. O-linked (Ara...) hydroxyproline glycosylation occurs at Pro-76.

The protein belongs to the CLV3/ESR signal peptide family. Post-translationally, the O-glycosylation (arabinosylation) of the hydroxyproline Pro-76 enhances binding affinity of the CLE5p peptide for its receptor. As to expression, mostly expressed in roots, and, to a lower extent, in seedlings, stems, apex, flowers and siliques.

It is found in the secreted. The protein resides in the extracellular space. Its function is as follows. Extracellular signal peptide that regulates cell fate. In Arabidopsis thaliana (Mouse-ear cress), this protein is CLAVATA3/ESR (CLE)-related protein 5.